The primary structure comprises 437 residues: Elongation factor 1-gamma-B (437 aa).

A GST N-terminal domain is found at 2-87 (AGGTLYTYPD…YVANDELRGS (86 aa)). The 134-residue stretch at 89–222 (NRLHQAQVIQ…KMAQFDAKKF (134 aa)) folds into the GST C-terminal domain. A compositionally biased stretch (basic and acidic residues) spans 225-240 (VQPKKETPKKEKPAKE). A disordered region spans residues 225–279 (VQPKKETPKKEKPAKEPKKKKKKKKKATPAPAPAPEDDLDESEKALAAEPKSKDP). The segment covering 241 to 251 (PKKKKKKKKKA) has biased composition (basic residues). Residues 266-279 (SEKALAAEPKSKDP) show a composition bias toward basic and acidic residues. The region spanning 276–437 (SKDPYAHLPK…KAFNQGKIFK (162 aa)) is the EF-1-gamma C-terminal domain.

In terms of assembly, EF-1 is composed of four subunits: alpha, beta, delta, and gamma.

Its function is as follows. Probably plays a role in anchoring the complex to other cellular components. The sequence is that of Elongation factor 1-gamma-B (eef1g-b) from Xenopus laevis (African clawed frog).